We begin with the raw amino-acid sequence, 594 residues long: UvrABC system protein C (594 aa).

Residues asparagine 13 to isoleucine 99 enclose the GIY-YIG domain. Residues aspartate 205–isoleucine 240 form the UVR domain.

The protein belongs to the UvrC family. As to quaternary structure, interacts with UvrB in an incision complex.

It is found in the cytoplasm. In terms of biological role, the UvrABC repair system catalyzes the recognition and processing of DNA lesions. UvrC both incises the 5' and 3' sides of the lesion. The N-terminal half is responsible for the 3' incision and the C-terminal half is responsible for the 5' incision. The sequence is that of UvrABC system protein C from Helicobacter pylori (strain ATCC 700392 / 26695) (Campylobacter pylori).